The primary structure comprises 497 residues: Probable cytosol aminopeptidase (497 aa).

The Mn(2+) site is built by K263 and D268. The active site involves K275. Residues D286, D345, and E347 each contribute to the Mn(2+) site. Residue R349 is part of the active site.

It belongs to the peptidase M17 family. The cofactor is Mn(2+).

It is found in the cytoplasm. The enzyme catalyses Release of an N-terminal amino acid, Xaa-|-Yaa-, in which Xaa is preferably Leu, but may be other amino acids including Pro although not Arg or Lys, and Yaa may be Pro. Amino acid amides and methyl esters are also readily hydrolyzed, but rates on arylamides are exceedingly low.. It catalyses the reaction Release of an N-terminal amino acid, preferentially leucine, but not glutamic or aspartic acids.. In terms of biological role, presumably involved in the processing and regular turnover of intracellular proteins. Catalyzes the removal of unsubstituted N-terminal amino acids from various peptides. This Brucella ovis (strain ATCC 25840 / 63/290 / NCTC 10512) protein is Probable cytosol aminopeptidase.